The following is a 294-amino-acid chain: Ribosomal RNA small subunit methyltransferase A (294 aa).

Positions 29, 31, 56, 77, 107, and 126 each coordinate S-adenosyl-L-methionine.

This sequence belongs to the class I-like SAM-binding methyltransferase superfamily. rRNA adenine N(6)-methyltransferase family. RsmA subfamily.

It is found in the cytoplasm. The enzyme catalyses adenosine(1518)/adenosine(1519) in 16S rRNA + 4 S-adenosyl-L-methionine = N(6)-dimethyladenosine(1518)/N(6)-dimethyladenosine(1519) in 16S rRNA + 4 S-adenosyl-L-homocysteine + 4 H(+). Its function is as follows. Specifically dimethylates two adjacent adenosines (A1518 and A1519) in the loop of a conserved hairpin near the 3'-end of 16S rRNA in the 30S particle. May play a critical role in biogenesis of 30S subunits. This is Ribosomal RNA small subunit methyltransferase A from Mycobacterium sp. (strain MCS).